Here is a 331-residue protein sequence, read N- to C-terminus: Major outer membrane protein P.IB (331 aa).

An N-terminal signal peptide occupies residues 1–19 (MKKSLIALTLAALPVAAMA).

Belongs to the Gram-negative porin family. As to quaternary structure, homotrimer.

It is found in the cell outer membrane. Its function is as follows. Serves as a slightly cation selective porin. The sequence is that of Major outer membrane protein P.IB (porB) from Neisseria meningitidis serogroup B (strain ATCC BAA-335 / MC58).